Here is a 250-residue protein sequence, read N- to C-terminus: 5-oxoprolinase subunit A (250 aa).

Belongs to the LamB/PxpA family. As to quaternary structure, forms a complex composed of PxpA, PxpB and PxpC.

The catalysed reaction is 5-oxo-L-proline + ATP + 2 H2O = L-glutamate + ADP + phosphate + H(+). Its function is as follows. Catalyzes the cleavage of 5-oxoproline to form L-glutamate coupled to the hydrolysis of ATP to ADP and inorganic phosphate. This chain is 5-oxoprolinase subunit A, found in Staphylococcus aureus (strain MW2).